Here is a 275-residue protein sequence, read N- to C-terminus: Undecaprenyl-diphosphatase (275 aa).

The next 8 helical transmembrane spans lie at 2–22, 43–63, 83–103, 111–131, 161–181, 186–206, 225–245, and 255–275; these read LDIF…FLPI, FINM…IVIY, WQIW…GLPL, MTSW…FIVL, VLSM…AMLI, YVAT…ASLL, ILLV…KFLL, and PFGW…LVFA.

It belongs to the UppP family.

Its subcellular location is the cell membrane. It carries out the reaction di-trans,octa-cis-undecaprenyl diphosphate + H2O = di-trans,octa-cis-undecaprenyl phosphate + phosphate + H(+). In terms of biological role, catalyzes the dephosphorylation of undecaprenyl diphosphate (UPP). Confers resistance to bacitracin. The chain is Undecaprenyl-diphosphatase from Lactobacillus delbrueckii subsp. bulgaricus (strain ATCC 11842 / DSM 20081 / BCRC 10696 / JCM 1002 / NBRC 13953 / NCIMB 11778 / NCTC 12712 / WDCM 00102 / Lb 14).